A 365-amino-acid chain; its full sequence is 3-dehydroquinate synthase (365 aa).

NAD(+) contacts are provided by residues 106 to 110, 130 to 131, Lys-142, Lys-151, and 169 to 172; these read GVIGD, TT, and FFAT. Zn(2+) is bound by residues Glu-184, His-247, and His-264.

This sequence belongs to the sugar phosphate cyclases superfamily. Dehydroquinate synthase family. Co(2+) serves as cofactor. The cofactor is Zn(2+). It depends on NAD(+) as a cofactor.

It is found in the cytoplasm. The enzyme catalyses 7-phospho-2-dehydro-3-deoxy-D-arabino-heptonate = 3-dehydroquinate + phosphate. The protein operates within metabolic intermediate biosynthesis; chorismate biosynthesis; chorismate from D-erythrose 4-phosphate and phosphoenolpyruvate: step 2/7. Its function is as follows. Catalyzes the conversion of 3-deoxy-D-arabino-heptulosonate 7-phosphate (DAHP) to dehydroquinate (DHQ). The polypeptide is 3-dehydroquinate synthase (Listeria monocytogenes serotype 4b (strain CLIP80459)).